The following is a 300-amino-acid chain: DNA repair protein PprA (300 aa).

Threonine 88 is modified (phosphothreonine). Serine 128 carries the phosphoserine modification. Threonine 160 is modified (phosphothreonine).

Post-translationally, phosphorylated by RqkA in vitro. Phosphorylated primarily at Thr-88, and to a little extent at Ser-128 and Thr-160.

With respect to regulation, phosphorylation increases DNA binding affinity. In terms of biological role, dsDNA-binding protein that contributes to the ionizing radiation resistance of D.radiodurans. Plays a role in DNA repair and genome reconstitution, and is necessary for recovery from severe genomic fragmentation as a result of exposure to severe levels of ionizing radiation. In vitro, binds to double-stranded DNA carrying strand breaks and stimulates the DNA end-joining reaction catalyzed by DNA ligases. Thus, PprA plays a critical role in a non-homologous end-joining (NHEJ) pathway for the repair of radiation-induced DNA double-strands breaks. Cannot bind to dsDNA without strand breaks or single-stranded DNA. The polypeptide is DNA repair protein PprA (pprA) (Deinococcus radiodurans (strain ATCC 13939 / DSM 20539 / JCM 16871 / CCUG 27074 / LMG 4051 / NBRC 15346 / NCIMB 9279 / VKM B-1422 / R1)).